Consider the following 188-residue polypeptide: Ribosomal RNA small subunit methyltransferase G (188 aa).

S-adenosyl-L-methionine contacts are provided by residues Gly69, Phe74, 119–120, and Arg134; that span reads VQ.

It belongs to the methyltransferase superfamily. RNA methyltransferase RsmG family.

It is found in the cytoplasm. The enzyme catalyses guanosine(527) in 16S rRNA + S-adenosyl-L-methionine = N(7)-methylguanosine(527) in 16S rRNA + S-adenosyl-L-homocysteine. Its function is as follows. Specifically methylates the N7 position of guanine in position 527 of 16S rRNA. The polypeptide is Ribosomal RNA small subunit methyltransferase G (Campylobacter jejuni subsp. jejuni serotype O:23/36 (strain 81-176)).